The primary structure comprises 466 residues: Protein hob1 (466 aa).

A BAR domain is found at Leu-17–Ala-269. 2 coiled-coil regions span residues Ile-31–Gln-67 and Glu-177–Glu-204. The disordered stretch occupies residues Pro-280 to Gly-342. Over residues Ala-294–Ser-303 the composition is skewed to low complexity. A phosphoserine mark is found at Ser-298, Ser-299, Ser-301, and Ser-303. The 60-residue stretch at Pro-407–Glu-466 folds into the SH3 domain.

Functionally, has a role in DNA damage signaling as a part of stress response processes. In Schizosaccharomyces pombe (strain 972 / ATCC 24843) (Fission yeast), this protein is Protein hob1 (hob1).